A 282-amino-acid polypeptide reads, in one-letter code: Ribosome biogenesis GTPase A (282 aa).

One can recognise a CP-type G domain in the interval 14-178 (RREVTEKLKL…LLDTPGILWP (165 aa)). GTP contacts are provided by residues 58–61 (NKAD), 86–87 (NS), 130–135 (NVGKST), and Gly174.

Belongs to the TRAFAC class YlqF/YawG GTPase family. MTG1 subfamily. As to quaternary structure, interacts with ctc. Interacts with the immature 50S ribosome subunit. 2 molecules of RbgA bind to one 50S subunit.

It localises to the cytoplasm. In terms of biological role, essential protein that is required for a late step of 50S ribosomal subunit assembly. Has GTPase activity that is stimulated by interaction with the immature 50S ribosome subunit. Binds to the 23S rRNA. Required for the association of ribosomal proteins RplP and RpmA with the large subunit. The chain is Ribosome biogenesis GTPase A (rbgA) from Bacillus subtilis (strain 168).